Reading from the N-terminus, the 2009-residue chain is Protein Daple (2009 aa).

The region spanning 11–131 is the Calponin-homology (CH) domain; sequence LFLQSPLVTW…KVLLLVLGCA (121 aa). A disordered region spans residues 221-251; the sequence is QTQQPPSPGKFSSPDSTPSPTSSLSSEDKQH. Ser-227 and Ser-239 each carry phosphoserine. Positions 232–245 are enriched in low complexity; it reads SSPDSTPSPTSSLS. Coiled coils occupy residues 247-425 and 456-1008; these read EDKQ…QKQS and ELNE…TQEG. Residue Ser-486 is modified to Phosphoserine. Positions 1002 to 1036 are disordered; it reads LRQTQEGGDKAQNALKRPPGKVTSHQEKEAWEPSH. The segment covering 1025-1036 has biased composition (basic and acidic residues); the sequence is SHQEKEAWEPSH. Residues 1190-1384 are a coiled coil; the sequence is HRNLELEHKE…LEEKIMDQYK (195 aa). The span at 1410–1419 shows a compositional bias: basic and acidic residues; it reads KEGSRERLKS. Disordered stretches follow at residues 1410-1716 and 1757-1787; these read KEGS…GAKM and GMPSRQVQPPQSLSLGRPRQTTMTQNCHMPV. Over residues 1430 to 1439 the composition is skewed to low complexity; sequence PSDPASPSPS. Ser-1435 is modified (phosphoserine). Polar residues predominate over residues 1440–1449; it reads QALRSQTENP. Composition is skewed to low complexity over residues 1510-1524 and 1562-1581; these read TFSTSATTAALSSST and NSLESSRNASSNSSPLSLKG. Position 1592 is a phosphoserine (Ser-1592). The short motif at 1652 to 1683 is the GBA element; it reads HSASPSSEMVTLEEFLEESNRGGSPTHDTPSC. Basic and acidic residues predominate over residues 1681–1697; the sequence is PSCRDDLLSDYFRKAHD. The segment covering 1761 to 1783 has biased composition (polar residues); the sequence is RQVQPPQSLSLGRPRQTTMTQNC. Ser-1798 is modified (phosphoserine). The segment at 1808–2009 is disordered; that stretch reads SGPEACRPES…QTVWYEYGCV (202 aa). Residues 1866–1883 show a composition bias toward basic and acidic residues; that stretch reads RPLDTRRFSLAPPKEERL. A compositionally biased stretch (polar residues) spans 1898 to 1911; that stretch reads GCSSGSNPQIQHFS. The span at 1943-1954 shows a compositional bias: gly residues; that stretch reads TSEGDGGPGHGY. Positions 1981 to 1991 are enriched in polar residues; sequence SQGSSSKSTPA. The PDZ-binding signature appears at 2006–2009; that stretch reads YGCV. The DVL1-binding stretch occupies residues 2007–2009; it reads GCV.

Belongs to the CCDC88 family. As to quaternary structure, homooligomer. Interacts with DVL1 (via PDZ domain); dissociates following initiation of non-canonical Wnt signaling. Interacts (via C-terminus) with ligand-activated Wnt receptor FZD7; competes with DVL1 for binding to FZD7 and displaces DVL1 from ligand-activated FZD7. Interacts (via GBA motif) with guanine nucleotide-binding protein G(i) alpha subunits GNAI1, GNAI2 and GNAI3 (inactive GDP-bound form); interacts with higher affinity with GNAI1 and GNAI3 than with GNAI2 and interaction leads to G(i) alpha subunit activation. Does not interact with GNAO1.

It localises to the cytoplasm. It is found in the cell junction. Its function is as follows. Required for activation of guanine nucleotide-binding proteins (G-proteins) during non-canonical Wnt signaling. Binds to ligand-activated Wnt receptor FZD7, displacing DVL1 from the FZD7 receptor and leading to inhibition of canonical Wnt signaling. Acts as a non-receptor guanine nucleotide exchange factor by also binding to guanine nucleotide-binding protein G(i) alpha (Gi-alpha) subunits, leading to their activation. Binding to Gi-alpha subunits displaces the beta and gamma subunits from the heterotrimeric G-protein complex, triggering non-canonical Wnt responses such as activation of RAC1 and PI3K-AKT signaling. Promotes apical constriction of cells via ARHGEF18. The sequence is that of Protein Daple (Ccdc88c) from Mus musculus (Mouse).